Here is a 112-residue protein sequence, read N- to C-terminus: Probable prefoldin subunit 1 (112 aa).

This sequence belongs to the prefoldin subunit beta family. Heterohexamer of two PFD-alpha type and four PFD-beta type subunits.

Functionally, binds specifically to cytosolic chaperonin (c-CPN) and transfers target proteins to it. Binds to nascent polypeptide chain and promotes folding in an environment in which there are many competing pathways for nonnative proteins. This chain is Probable prefoldin subunit 1, found in Schizosaccharomyces pombe (strain 972 / ATCC 24843) (Fission yeast).